We begin with the raw amino-acid sequence, 54 residues long: Preprotein translocase subunit SecG (54 aa).

The Cytoplasmic segment spans residues 1–31; it reads MSSGQNSGGLMSSAGLVRYFDAEDRNSIRID. A helical membrane pass occupies residues 32-53; it reads PKTIVAFGVLFGVGVLVLNALA. Residue I54 is a topological domain, extracellular.

It belongs to the SEC61-beta family. Component of the protein translocase complex. Heterotrimer consisting of alpha (SecY), beta (SecG) and gamma (SecE) subunits. Can form oligomers of the heterotrimer.

The protein localises to the cell membrane. Its function is as follows. Involved in protein export. The function of the beta subunit is unknown, but it may be involved in stabilization of the trimeric complex. The sequence is that of Preprotein translocase subunit SecG from Haloquadratum walsbyi (strain DSM 16790 / HBSQ001).